The primary structure comprises 311 residues: Ribosomal RNA small subunit methyltransferase H (311 aa).

Residues 34 to 36, D54, F78, D100, and Q107 each bind S-adenosyl-L-methionine; that span reads GGH.

It belongs to the methyltransferase superfamily. RsmH family.

Its subcellular location is the cytoplasm. The catalysed reaction is cytidine(1402) in 16S rRNA + S-adenosyl-L-methionine = N(4)-methylcytidine(1402) in 16S rRNA + S-adenosyl-L-homocysteine + H(+). In terms of biological role, specifically methylates the N4 position of cytidine in position 1402 (C1402) of 16S rRNA. The chain is Ribosomal RNA small subunit methyltransferase H from Hamiltonella defensa subsp. Acyrthosiphon pisum (strain 5AT).